The sequence spans 276 residues: NADPH-dependent 7-cyano-7-deazaguanine reductase (276 aa).

83–85 (IES) serves as a coordination point for substrate. 85–86 (SK) provides a ligand contact to NADPH. Cys184 acts as the Thioimide intermediate in catalysis. Catalysis depends on Asp191, which acts as the Proton donor. A substrate-binding site is contributed by 223 to 224 (HE). Residue 252-253 (RG) participates in NADPH binding.

It belongs to the GTP cyclohydrolase I family. QueF type 2 subfamily. Homodimer.

Its subcellular location is the cytoplasm. It catalyses the reaction 7-aminomethyl-7-carbaguanine + 2 NADP(+) = 7-cyano-7-deazaguanine + 2 NADPH + 3 H(+). The protein operates within tRNA modification; tRNA-queuosine biosynthesis. Its function is as follows. Catalyzes the NADPH-dependent reduction of 7-cyano-7-deazaguanine (preQ0) to 7-aminomethyl-7-deazaguanine (preQ1). This chain is NADPH-dependent 7-cyano-7-deazaguanine reductase, found in Desulfotalea psychrophila (strain LSv54 / DSM 12343).